The sequence spans 474 residues: Aspartyl/glutamyl-tRNA(Asn/Gln) amidotransferase subunit B (474 aa).

Belongs to the GatB/GatE family. GatB subfamily. As to quaternary structure, heterotrimer of A, B and C subunits.

The enzyme catalyses L-glutamyl-tRNA(Gln) + L-glutamine + ATP + H2O = L-glutaminyl-tRNA(Gln) + L-glutamate + ADP + phosphate + H(+). The catalysed reaction is L-aspartyl-tRNA(Asn) + L-glutamine + ATP + H2O = L-asparaginyl-tRNA(Asn) + L-glutamate + ADP + phosphate + 2 H(+). Its function is as follows. Allows the formation of correctly charged Asn-tRNA(Asn) or Gln-tRNA(Gln) through the transamidation of misacylated Asp-tRNA(Asn) or Glu-tRNA(Gln) in organisms which lack either or both of asparaginyl-tRNA or glutaminyl-tRNA synthetases. The reaction takes place in the presence of glutamine and ATP through an activated phospho-Asp-tRNA(Asn) or phospho-Glu-tRNA(Gln). The sequence is that of Aspartyl/glutamyl-tRNA(Asn/Gln) amidotransferase subunit B from Desulfotalea psychrophila (strain LSv54 / DSM 12343).